Reading from the N-terminus, the 453-residue chain is Tubulin alpha chain (453 aa).

GTP is bound at residue Gln-11. Lys-40 carries the post-translational modification N6-acetyllysine. The GTP site is built by Glu-71, Gly-144, Thr-145, Thr-179, Asn-206, and Asn-228. Glu-71 is a binding site for Mg(2+). Glu-254 is an active-site residue.

It belongs to the tubulin family. Dimer of alpha and beta chains. A typical microtubule is a hollow water-filled tube with an outer diameter of 25 nm and an inner diameter of 15 nM. Alpha-beta heterodimers associate head-to-tail to form protofilaments running lengthwise along the microtubule wall with the beta-tubulin subunit facing the microtubule plus end conferring a structural polarity. Microtubules usually have 13 protofilaments but different protofilament numbers can be found in some organisms and specialized cells. Requires Mg(2+) as cofactor. In terms of processing, undergoes a tyrosination/detyrosination cycle, the cyclic removal and re-addition of a C-terminal tyrosine residue by the enzymes tubulin tyrosine carboxypeptidase (TTCP) and tubulin tyrosine ligase (TTL), respectively. Acetylation of alpha chains at Lys-40 stabilizes microtubules and affects affinity and processivity of microtubule motors. This modification has a role in multiple cellular functions, ranging from cell motility, cell cycle progression or cell differentiation to intracellular trafficking and signaling.

The protein resides in the cytoplasm. It is found in the cytoskeleton. The catalysed reaction is GTP + H2O = GDP + phosphate + H(+). Its function is as follows. Tubulin is the major constituent of microtubules, a cylinder consisting of laterally associated linear protofilaments composed of alpha- and beta-tubulin heterodimers. Microtubules grow by the addition of GTP-tubulin dimers to the microtubule end, where a stabilizing cap forms. Below the cap, tubulin dimers are in GDP-bound state, owing to GTPase activity of alpha-tubulin. In Plasmodium falciparum (isolate K1 / Thailand), this protein is Tubulin alpha chain.